The chain runs to 496 residues: Gamma-aminobutyric acid receptor subunit beta-like (496 aa).

Positions 1 to 20 form a signal peptide, or 27; sequence MTCFTRVGVSCGLFFFLLGA. Over 21-258 the chain is Extracellular; it reads QLQLIRCIRK…SFKLQRNIGY (238 aa). 2 N-linked (GlcNAc...) asparagine glycosylation sites follow: asparagine 39 and asparagine 189. A disulfide bond links cysteine 176 and cysteine 190. 3 helical membrane-spanning segments follow: residues 259–280, 285–306, and 318–342; these read FVFQ…SFWI, TSAR…STGV, and AIDI…AVNY. Residues 343–472 lie on the Cytoplasmic side of the membrane; sequence TYWGKRAKKK…KIKDVNIIDK (130 aa). A helical membrane pass occupies residues 473–494; that stretch reads YSRMIFPISFLAFNLGYWLFYI.

The protein belongs to the ligand-gated ion channel (TC 1.A.9) family. Gamma-aminobutyric acid receptor (TC 1.A.9.5) subfamily. As to quaternary structure, generally pentameric. There are five types of GABA(A) receptor chains: alpha, beta, gamma, delta, and rho. Interacts with Grd (alpha chain).

It localises to the postsynaptic cell membrane. The protein localises to the cell membrane. GABA, an inhibitory neurotransmitter, mediates neuronal inhibition by binding to the GABA receptor and opening an integral chloride channel. Combines with the ligand-gated ion channel subunit GRD to form cation-selective GABA-gated ion channels when coexpressed in Xenopus laevis oocytes. This is Gamma-aminobutyric acid receptor subunit beta-like (Lcch3) from Drosophila melanogaster (Fruit fly).